The sequence spans 235 residues: Orotidine 5'-phosphate decarboxylase (235 aa).

Substrate contacts are provided by residues D12, K34, 61 to 70 (DMKLLDIDNT), T116, R177, Q186, and R207. K63 serves as the catalytic Proton donor.

The protein belongs to the OMP decarboxylase family. Type 1 subfamily. Homodimer.

The catalysed reaction is orotidine 5'-phosphate + H(+) = UMP + CO2. It functions in the pathway pyrimidine metabolism; UMP biosynthesis via de novo pathway; UMP from orotate: step 2/2. In terms of biological role, catalyzes the decarboxylation of orotidine 5'-monophosphate (OMP) to uridine 5'-monophosphate (UMP). This is Orotidine 5'-phosphate decarboxylase from Rhizobium etli (strain CIAT 652).